Consider the following 207-residue polypeptide: Glutathione S-transferase 3 (207 aa).

The GST N-terminal domain occupies 2-79 (VHYKLTYFNA…YLARKFGFVG (78 aa)). Glutathione contacts are provided by residues Tyr-8, Lys-43, 49–51 (GQV), and 63–64 (QS). Residues 81 to 207 (TAEEELQADE…WLAKRPETRF (127 aa)) form the GST C-terminal domain.

The protein belongs to the GST superfamily. Sigma family.

The catalysed reaction is RX + glutathione = an S-substituted glutathione + a halide anion + H(+). In terms of biological role, conjugation of reduced glutathione to a wide number of exogenous and endogenous hydrophobic electrophiles. The sequence is that of Glutathione S-transferase 3 (gst-3) from Caenorhabditis elegans.